Reading from the N-terminus, the 301-residue chain is Probable alpha-L-glutamate ligase (301 aa).

The ATP-grasp domain maps to 104-287; that stretch reads LQLLSRRGIG…VAGIIIEHLE (184 aa). ATP is bound by residues Lys141, 178-179, Asp187, and 211-213; these read EY and RSN. Positions 248, 260, and 262 each coordinate Mg(2+). The Mn(2+) site is built by Asp248, Glu260, and Asn262.

It belongs to the RimK family. Requires Mg(2+) as cofactor. Mn(2+) is required as a cofactor.

This Pseudomonas fluorescens (strain Pf0-1) protein is Probable alpha-L-glutamate ligase.